We begin with the raw amino-acid sequence, 311 residues long: Porphobilinogen deaminase (311 aa).

Residue Cys-243 is modified to S-(dipyrrolylmethanemethyl)cysteine.

The protein belongs to the HMBS family. Monomer. It depends on dipyrromethane as a cofactor.

The enzyme catalyses 4 porphobilinogen + H2O = hydroxymethylbilane + 4 NH4(+). It functions in the pathway porphyrin-containing compound metabolism; protoporphyrin-IX biosynthesis; coproporphyrinogen-III from 5-aminolevulinate: step 2/4. Functionally, tetrapolymerization of the monopyrrole PBG into the hydroxymethylbilane pre-uroporphyrinogen in several discrete steps. This chain is Porphobilinogen deaminase, found in Aliivibrio salmonicida (strain LFI1238) (Vibrio salmonicida (strain LFI1238)).